We begin with the raw amino-acid sequence, 84 residues long: UPF0291 protein EUBELI_00985 (84 aa).

This sequence belongs to the UPF0291 family.

The protein localises to the cytoplasm. This Lachnospira eligens (strain ATCC 27750 / DSM 3376 / VPI C15-48 / C15-B4) (Eubacterium eligens) protein is UPF0291 protein EUBELI_00985.